We begin with the raw amino-acid sequence, 404 residues long: Cysteine desulfurase IscS (404 aa).

Residues A75 to T76, N155, Q183, and S203 to H205 each bind pyridoxal 5'-phosphate. N6-(pyridoxal phosphate)lysine is present on K206. T243 serves as a coordination point for pyridoxal 5'-phosphate. The Cysteine persulfide intermediate role is filled by C328. C328 contacts [2Fe-2S] cluster.

It belongs to the class-V pyridoxal-phosphate-dependent aminotransferase family. NifS/IscS subfamily. In terms of assembly, homodimer. Forms a heterotetramer with IscU, interacts with other sulfur acceptors. Pyridoxal 5'-phosphate serves as cofactor.

The protein localises to the cytoplasm. It catalyses the reaction (sulfur carrier)-H + L-cysteine = (sulfur carrier)-SH + L-alanine. Its pathway is cofactor biosynthesis; iron-sulfur cluster biosynthesis. Its function is as follows. Master enzyme that delivers sulfur to a number of partners involved in Fe-S cluster assembly, tRNA modification or cofactor biosynthesis. Catalyzes the removal of elemental sulfur atoms from cysteine to produce alanine. Functions as a sulfur delivery protein for Fe-S cluster synthesis onto IscU, an Fe-S scaffold assembly protein, as well as other S acceptor proteins. The sequence is that of Cysteine desulfurase IscS from Shewanella oneidensis (strain ATCC 700550 / JCM 31522 / CIP 106686 / LMG 19005 / NCIMB 14063 / MR-1).